Here is a 186-residue protein sequence, read N- to C-terminus: Ribosome-recycling factor (186 aa).

The protein belongs to the RRF family.

The protein localises to the cytoplasm. Functionally, responsible for the release of ribosomes from messenger RNA at the termination of protein biosynthesis. May increase the efficiency of translation by recycling ribosomes from one round of translation to another. The sequence is that of Ribosome-recycling factor from Bartonella henselae (strain ATCC 49882 / DSM 28221 / CCUG 30454 / Houston 1) (Rochalimaea henselae).